Reading from the N-terminus, the 389-residue chain is S-adenosylmethionine synthase (389 aa).

H19 contributes to the ATP binding site. D21 provides a ligand contact to Mg(2+). E47 is a binding site for K(+). L-methionine-binding residues include E60 and Q103. A flexible loop region spans residues Q103–R113. ATP contacts are provided by residues D168–K170, R234–F235, D243, R249–K250, A266, and K270. D243 contacts L-methionine. An L-methionine-binding site is contributed by K274.

This sequence belongs to the AdoMet synthase family. In terms of assembly, homotetramer; dimer of dimers. Mg(2+) serves as cofactor. Requires K(+) as cofactor.

It localises to the cytoplasm. The enzyme catalyses L-methionine + ATP + H2O = S-adenosyl-L-methionine + phosphate + diphosphate. Its pathway is amino-acid biosynthesis; S-adenosyl-L-methionine biosynthesis; S-adenosyl-L-methionine from L-methionine: step 1/1. Catalyzes the formation of S-adenosylmethionine (AdoMet) from methionine and ATP. The overall synthetic reaction is composed of two sequential steps, AdoMet formation and the subsequent tripolyphosphate hydrolysis which occurs prior to release of AdoMet from the enzyme. This is S-adenosylmethionine synthase from Maridesulfovibrio salexigens (strain ATCC 14822 / DSM 2638 / NCIMB 8403 / VKM B-1763) (Desulfovibrio salexigens).